A 427-amino-acid polypeptide reads, in one-letter code: Glutamyl-tRNA reductase (427 aa).

Residues 49 to 52 (TCNR), S109, 114 to 116 (EGQ), and Q120 each bind substrate. The Nucleophile role is filled by C50. Residue 188–193 (GAGKMA) participates in NADP(+) binding.

The protein belongs to the glutamyl-tRNA reductase family. Homodimer.

The enzyme catalyses (S)-4-amino-5-oxopentanoate + tRNA(Glu) + NADP(+) = L-glutamyl-tRNA(Glu) + NADPH + H(+). It functions in the pathway porphyrin-containing compound metabolism; protoporphyrin-IX biosynthesis; 5-aminolevulinate from L-glutamyl-tRNA(Glu): step 1/2. Its pathway is porphyrin-containing compound metabolism; chlorophyll biosynthesis. Feedback inhibition by heme. Its function is as follows. Catalyzes the NADPH-dependent reduction of glutamyl-tRNA(Glu) to glutamate 1-semialdehyde (GSA). This Synechocystis sp. (strain ATCC 27184 / PCC 6803 / Kazusa) protein is Glutamyl-tRNA reductase.